Here is a 695-residue protein sequence, read N- to C-terminus: RING finger protein 145 (695 aa).

13 helical membrane passes run 53-73, 77-97, 123-143, 146-166, 168-188, 225-245, 275-295, 316-336, 340-360, 384-404, 410-430, 460-480, and 482-502; these read YLALNMHYVGYILSVVLLTLP, LAKLYLYFVAALLLFAGHQIS, FITALVGQLVVCTLCSCVMKT, IWLFSAHMLPLLARLCLIPIE, IVVINKFAMIFTGLEVLYFLA, LVVPVLFMVFWLVLFALQIYT, YSLLGLVFTVSFVALGVLTLC, TEGVTLLILAVQTGLIELQVV, FLLSIILFIVVASILQSMLEI, SLCLFLLVFPSYMAYMICQFF, LLIIISSSILTSLQVLGTLFV, LLEFLVALCVVAYGVSETVFG, and WTVMGSMIIFIHSYYNVWLRA. Residues 537-575 form an RING-type; atypical zinc finger; it reads CSICYQDMNSAVITPCSHFFHPGCLKKWLYVQETCPLCH. Residues 589–604 are compositionally biased toward polar residues; the sequence is SGSSTNPVVEQSANNP. A disordered region spans residues 589-608; sequence SGSSTNPVVEQSANNPPQEP.

It localises to the membrane. The polypeptide is RING finger protein 145 (rnf145) (Xenopus laevis (African clawed frog)).